The following is a 185-amino-acid chain: Proton-translocating ferredoxin:NAD(+) oxidoreductase complex subunit G (185 aa).

Residues 14 to 34 (TKNLTITCFISGIIIAAVYYI) traverse the membrane as a helical segment. Residue T161 is modified to FMN phosphoryl threonine.

It belongs to the RnfG family. As to quaternary structure, the complex is composed of six subunits: RnfA, RnfB, RnfC, RnfD, RnfE and RnfG. The cofactor is FMN.

The protein localises to the cell membrane. Its function is as follows. Part of a membrane-bound complex that couples electron transfer with translocation of ions across the membrane. Couples electron transfer from reduced ferredoxin to NAD(+) with translocation of H(+) out of the cell. Essential for energy conservation during autotrophic growth. Contributes to ATP synthesis during heterotrophic growth. This is Proton-translocating ferredoxin:NAD(+) oxidoreductase complex subunit G from Clostridium ljungdahlii (strain ATCC 55383 / DSM 13528 / PETC).